The following is a 275-amino-acid chain: 2-dehydro-3-deoxyphosphooctonate aldolase (275 aa).

This sequence belongs to the KdsA family.

Its subcellular location is the cytoplasm. It catalyses the reaction D-arabinose 5-phosphate + phosphoenolpyruvate + H2O = 3-deoxy-alpha-D-manno-2-octulosonate-8-phosphate + phosphate. It participates in carbohydrate biosynthesis; 3-deoxy-D-manno-octulosonate biosynthesis; 3-deoxy-D-manno-octulosonate from D-ribulose 5-phosphate: step 2/3. The protein operates within bacterial outer membrane biogenesis; lipopolysaccharide biosynthesis. This is 2-dehydro-3-deoxyphosphooctonate aldolase from Protochlamydia amoebophila (strain UWE25).